The following is a 157-amino-acid chain: Transcriptional repressor NrdR (157 aa).

The segment at 3–34 (CPSCQNTDSRVLESRSADAGKCVRRRRECLNC) is a zinc-finger region. The region spanning 49 to 139 (VTVIKRSNAK…VYRQFNGIED (91 aa)) is the ATP-cone domain.

It belongs to the NrdR family. Requires Zn(2+) as cofactor.

Negatively regulates transcription of bacterial ribonucleotide reductase nrd genes and operons by binding to NrdR-boxes. This Prochlorococcus marinus (strain SARG / CCMP1375 / SS120) protein is Transcriptional repressor NrdR.